A 370-amino-acid chain; its full sequence is Chorismate synthase (370 aa).

R47 serves as a coordination point for NADP(+). Residues 124 to 126 (RSS), G286, 301 to 305 (KPTAT), and R327 each bind FMN.

This sequence belongs to the chorismate synthase family. Homotetramer. FMNH2 serves as cofactor.

The catalysed reaction is 5-O-(1-carboxyvinyl)-3-phosphoshikimate = chorismate + phosphate. It functions in the pathway metabolic intermediate biosynthesis; chorismate biosynthesis; chorismate from D-erythrose 4-phosphate and phosphoenolpyruvate: step 7/7. Functionally, catalyzes the anti-1,4-elimination of the C-3 phosphate and the C-6 proR hydrogen from 5-enolpyruvylshikimate-3-phosphate (EPSP) to yield chorismate, which is the branch point compound that serves as the starting substrate for the three terminal pathways of aromatic amino acid biosynthesis. This reaction introduces a second double bond into the aromatic ring system. This Trichodesmium erythraeum (strain IMS101) protein is Chorismate synthase.